The chain runs to 202 residues: Nudix hydrolase 13, mitochondrial (202 aa).

The region spanning 18–167 (NFRLVSGCIP…WMQSALEEFL (150 aa)) is the Nudix hydrolase domain. Residues 65–86 (GGWEDDETVLEAASREAMEEAG) carry the Nudix box motif. Residues E80 and E84 each contribute to the Mg(2+) site.

Belongs to the Nudix hydrolase family. Monomer. The cofactor is Mg(2+). In terms of tissue distribution, expressed in roots, leaves, stems and inflorescences.

Its subcellular location is the mitochondrion. Inhibited by fluoride. Functionally, mediates the hydrolysis of some nucleoside diphosphate derivatives. Can use diadenosine 5',5'''-P(1)P(6) hexaphosphate (Ap(6)A), diadenosine 5',5'''-P(1)P(5) pentaphosphate (Ap(5)A) and adenosine tetraphosphate (p(4)A) as substrates, but not diadenosine 5',5'''-P(1)P(4) tetraphosphate (Ap(4)A), diadenosine 5',5'''-P(1)P(3) triphosphate (Ap(3)A), deoxyribonucleoside triphosphates, ribonucleoside triphosphates, diphosphoinositol pentakisphosphate (PP-InsP(5)) and 5-phospho-alpha-D-ribosyl diphosphate (PRPP). In Arabidopsis thaliana (Mouse-ear cress), this protein is Nudix hydrolase 13, mitochondrial (NUDT13).